The following is a 375-amino-acid chain: DNA replication and repair protein RecF (375 aa).

Residue 30–37 participates in ATP binding; sequence GNNAQGKS.

Belongs to the RecF family.

The protein resides in the cytoplasm. The RecF protein is involved in DNA metabolism; it is required for DNA replication and normal SOS inducibility. RecF binds preferentially to single-stranded, linear DNA. It also seems to bind ATP. The chain is DNA replication and repair protein RecF from Microcystis aeruginosa (strain NIES-843 / IAM M-2473).